A 70-amino-acid chain; its full sequence is ATP synthase subunit c (70 aa).

A run of 2 helical transmembrane segments spans residues 4–24 (IAAA…NGLI) and 47–67 (FIGI…SFIV).

This sequence belongs to the ATPase C chain family. As to quaternary structure, F-type ATPases have 2 components, F(1) - the catalytic core - and F(0) - the membrane proton channel. F(1) has five subunits: alpha(3), beta(3), gamma(1), delta(1), epsilon(1). F(0) has three main subunits: a(1), b(2) and c(10-14). The alpha and beta chains form an alternating ring which encloses part of the gamma chain. F(1) is attached to F(0) by a central stalk formed by the gamma and epsilon chains, while a peripheral stalk is formed by the delta and b chains.

It is found in the cell membrane. F(1)F(0) ATP synthase produces ATP from ADP in the presence of a proton or sodium gradient. F-type ATPases consist of two structural domains, F(1) containing the extramembraneous catalytic core and F(0) containing the membrane proton channel, linked together by a central stalk and a peripheral stalk. During catalysis, ATP synthesis in the catalytic domain of F(1) is coupled via a rotary mechanism of the central stalk subunits to proton translocation. Functionally, key component of the F(0) channel; it plays a direct role in translocation across the membrane. A homomeric c-ring of between 10-14 subunits forms the central stalk rotor element with the F(1) delta and epsilon subunits. This chain is ATP synthase subunit c, found in Staphylococcus carnosus (strain TM300).